The chain runs to 950 residues: Protein translocase subunit SecA (950 aa).

ATP is bound by residues Gln87, 105 to 109, and Asp524; that span reads GEGKT. Positions 908–932 are disordered; it reads GAAPVPAEARNPNDPSTWGKVGRNE. Residues Cys934, Cys936, Cys945, and His946 each contribute to the Zn(2+) site.

Belongs to the SecA family. Monomer and homodimer. Part of the essential Sec protein translocation apparatus which comprises SecA, SecYEG and auxiliary proteins SecDF-YajC and YidC. Zn(2+) serves as cofactor.

The protein localises to the cell inner membrane. Its subcellular location is the cytoplasm. It carries out the reaction ATP + H2O + cellular proteinSide 1 = ADP + phosphate + cellular proteinSide 2.. Part of the Sec protein translocase complex. Interacts with the SecYEG preprotein conducting channel. Has a central role in coupling the hydrolysis of ATP to the transfer of proteins into and across the cell membrane, serving both as a receptor for the preprotein-SecB complex and as an ATP-driven molecular motor driving the stepwise translocation of polypeptide chains across the membrane. In Bradyrhizobium sp. (strain BTAi1 / ATCC BAA-1182), this protein is Protein translocase subunit SecA.